The following is a 530-amino-acid chain: Glucose-6-phosphate isomerase (530 aa).

Catalysis depends on Glu322, which acts as the Proton donor. Active-site residues include His351 and Lys455.

This sequence belongs to the GPI family.

The protein resides in the cytoplasm. It carries out the reaction alpha-D-glucose 6-phosphate = beta-D-fructose 6-phosphate. The protein operates within carbohydrate biosynthesis; gluconeogenesis. Its pathway is carbohydrate degradation; glycolysis; D-glyceraldehyde 3-phosphate and glycerone phosphate from D-glucose: step 2/4. Its function is as follows. Catalyzes the reversible isomerization of glucose-6-phosphate to fructose-6-phosphate. This chain is Glucose-6-phosphate isomerase, found in Citrifermentans bemidjiense (strain ATCC BAA-1014 / DSM 16622 / JCM 12645 / Bem) (Geobacter bemidjiensis).